We begin with the raw amino-acid sequence, 1173 residues long: WASH complex subunit 4 (1173 aa).

Position 2 is an N-acetylalanine (A2). S7 bears the Phosphoserine mark. A coiled-coil region spans residues Q27–V56. The sufficient for interaction with WASHC5 stretch occupies residues K705 to K1173. Residues A1141–K1155 show a composition bias toward basic and acidic residues. Positions A1141 to K1173 are disordered. T1154 carries the phosphothreonine modification.

It belongs to the SWIP family. As to quaternary structure, component of the WASH core complex also described as WASH regulatory complex (SHRC) composed of WASH (WASHC1, WASH2P or WASH3P), WASHC2 (WASHC2A or WASHC2C), WASHC3, WASHC4 and WASHC5. The WASH core complex associates via WASHC2 with the F-actin-capping protein dimer (formed by CAPZA1, CAPZA2 or CAPZA3 and CAPZB) in a transient or substoichiometric manner which was initially described as WASH complex.

The protein resides in the early endosome. In terms of biological role, acts as a component of the WASH core complex that functions as a nucleation-promoting factor (NPF) at the surface of endosomes, where it recruits and activates the Arp2/3 complex to induce actin polymerization, playing a key role in the fission of tubules that serve as transport intermediates during endosome sorting. The sequence is that of WASH complex subunit 4 from Mus musculus (Mouse).